The following is a 660-amino-acid chain: Phosphatidylinositol-3-phosphate phosphatase MTMR7 (660 aa).

In terms of domain architecture, Myotubularin phosphatase spans 126-504 (GWLLVDLSEE…FTYKFWNGMY (379 aa)). Residues Asn250, Asn275, and Ile276 each coordinate a 1,2-diacyl-sn-glycero-3-phospho-(1D-myo-inositol-3-phosphate). The active-site Phosphocysteine intermediate is Cys338. 7 residues coordinate a 1,2-diacyl-sn-glycero-3-phospho-(1D-myo-inositol-3-phosphate): Ser339, Asp340, Gly341, Trp342, Asp343, Arg344, and Arg384. Residues 514–548 (RQSVTDYLMAVKEESQQLEEELESLEERLEKIQKV) are a coiled coil. Residues 550-660 (LHGTKVKSKQ…DSDEAVFLTA (111 aa)) are disordered. A compositionally biased stretch (polar residues) spans 566 to 596 (SGFSTSDHSTANTPQDYSGNSKSFPSRSPSQ). Thr578 carries the phosphothreonine modification. Residues 641–653 (APSEDSGKDRDSD) show a composition bias toward basic and acidic residues.

Belongs to the protein-tyrosine phosphatase family. Non-receptor class myotubularin subfamily. In terms of assembly, heterodimer (via C-terminus) with MTMR9 (via coiled coil domain); the interaction enhances MTMR7 catalytic activity. Does not homodimerize. Interacts with RAB1B (in GDP-bound form). In terms of tissue distribution, highly expressed in brain (at protein level). Expressed at low levels in liver, kidney and testis.

The protein resides in the cytoplasm. Its subcellular location is the endomembrane system. The enzyme catalyses a 1,2-diacyl-sn-glycero-3-phospho-(1D-myo-inositol-3-phosphate) + H2O = a 1,2-diacyl-sn-glycero-3-phospho-(1D-myo-inositol) + phosphate. The catalysed reaction is 1D-myo-inositol 1,3-bisphosphate + H2O = 1D-myo-inositol 1-phosphate + phosphate. Interaction with MTMR9 increases phosphatase activity. Its function is as follows. Lipid phosphatase that specifically dephosphorylates the D-3 position of phosphatidylinositol 3-phosphate (PtdIns(3)P) and inositol 1,3-bisphosphate (Ins(1,3)P2). This is Phosphatidylinositol-3-phosphate phosphatase MTMR7 from Mus musculus (Mouse).